Consider the following 557-residue polypeptide: Hyaluronan synthase 3 (557 aa).

At 1–10 (MPGKFQTGLR) the chain is on the cytoplasmic side. Residues 11–31 (VLATCLFALLVLGGILVAYVT) form a helical membrane-spanning segment. Residues 32-44 (GYQFIHTDRHHLS) are Extracellular-facing. Residues 45–65 (FGLYGAILGLHLLSQSLFAFL) form a helical membrane-spanning segment. Topologically, residues 66–367 (EHRKMRGGGR…NALWFHKHHL (302 aa)) are cytoplasmic. A helical transmembrane segment spans residues 368-388 (WMTYESVVTGFFPFFLVATVV). Over 389–398 (QLFYRGRVWN) the chain is Extracellular. Residues 399–419 (ILLFLLTVQLVGILKATYACI) form a helical membrane-spanning segment. Over 420–430 (LRGNAEMIFMS) the chain is Cytoplasmic. The helical transmembrane segment at 431–451 (LYSLLYMTSLLPAKIFAVITI) threads the bilayer. The Extracellular segment spans residues 452-463 (KKSGWGTSGRRK). The helical transmembrane segment at 464 to 484 (LVVNFMGMVPVSVWFCILLGG) threads the bilayer. Over 485 to 501 (LVYTAYCQSHDPFTETE) the chain is Cytoplasmic. The helical transmembrane segment at 502-522 (LLFLLTGAILYGCYWVALLSL) threads the bilayer. Residues 523 to 557 (YLALIARRCGKRQELYNLALEEVSEPEPAAKAIKP) lie on the Extracellular side of the membrane.

It belongs to the NodC/HAS family. The cofactor is Mg(2+). Post-translationally, O-GlcNAcylation increases the hyaluronan synthase activity, HAS3 stability and its plasma membrane residence. The concentration of UDP-GlcNAc controls the level of O-GlcNAc modification.

The protein resides in the cell membrane. It localises to the golgi apparatus membrane. It is found in the golgi apparatus. Its subcellular location is the trans-Golgi network membrane. The protein localises to the cytoplasmic vesicle. It catalyses the reaction [hyaluronan](n) + UDP-N-acetyl-alpha-D-glucosamine = N-acetyl-beta-D-glucosaminyl-(1-&gt;4)-[hyaluronan](n) + UDP + H(+). The catalysed reaction is N-acetyl-beta-D-glucosaminyl-(1-&gt;4)-[hyaluronan](n) + UDP-alpha-D-glucuronate = [hyaluronan](n+1) + UDP + H(+). Its pathway is glycan biosynthesis; hyaluronan biosynthesis. Functionally, catalyzes the addition of GlcNAc or GlcUA monosaccharides to the nascent hyaluronan polymer. Therefore, it is essential to hyaluronan synthesis a major component of most extracellular matrices that has a structural role in tissues architectures and regulates cell adhesion, migration and differentiation. This is one of three isoenzymes responsible for cellular hyaluronan synthesis. The chain is Hyaluronan synthase 3 (has3) from Xenopus laevis (African clawed frog).